Consider the following 1402-residue polypeptide: MNQEVMNLFNPQVPAQHFDSIRISIASPEKILSWSYGEIKKPETINYRTFKPERDGLFCARIFGPIKDYECLCGKYKRMKYKGIICEKCGVEVTLSRVRRERMGHIELAAPVAHIWFLKSLPSRISTLLDMTLKDVERVLYFENYIVTEPGLTSLKQNQLLSEEEYMIAVDEFGEDQFTAMIGAEAIYEMLASMNLEKIAGDLRAELAETTSDLKQKKFMKRLKIVENFMESGNRPEWMIMKVVPVIPPDLRPLVPLDGGRFATSDLNDLYRRVINRNNRLKRLIELRAPGIIIRNEKRMLQESVDALFDNGRRGRVITGANKRPLKSLSDMLKGKQGRFRQNLLGKRVDYSGRSVIVTGPELKLHQCGLPKKMALELFKPFIYARLDAKGYSSTVKQAKKLVEKEKPEVWDILDEVIREHPVLLNRAPTLHRLGIQAFEPMLVEGKAIQLHPLVCTAFNADFDGDQMAVHVPLSLEAQLEARVLMMSTNNILHPANGHPIIVPSQDMVLGLYYLSIMNQNEPGEGMAFSDIGELHHALENKVVTLHAKIRGRFKTVDADGKPVSKIHETTPGRMLIGELLPKNVNVPFDTCNQEMTKKNISKMIDTVYRHCGQKDTVIFCDRIMQLGFSHACRAGISFGKDDMVIPDSKVKIVGDTEALVKEYEQQYNDGLITQGEKYNKVVDAWGKATEKVAEEMMARIKAVEFDPETGRQKPMNSIYMMSHSGARGSPNQMRQLGGMRGLMAKPSGEIIETPIISNFKEGLTVNEYFNSTHGARKGLADTALKTANSGYLTRRLVDVAQDCIVNSVDCGTDKGLTMTAIVDAGQIVASIGARILGRTALDDIDNPVTGENIVKAGTLIDEADVAIIEKAGIQSVRIRSALTCEVQIGVCGVCYGRDLARGTPVNMGEAVGVIAAQSIGEPGTQLTMRTFHLGGTANVVDQSFLEASYEGTIQIKNRNILRNSEGVLIAMGRNMSVTILDERGVERSSQRVAYGSKIFVDDGDKVKRGQRLAEWDPYTRPMMTEVEGTVHFEDLVDGLSVLEATDESTGITKRQVIDWRSTPRGSDLKPAIIIKDASGAVAKLSRGGEARFHLSVDAILSVEPGSKVSQGDVLARSPLESAKTKDITGGLPRVAELFEARRPKDHAIIAEIDGTIRLGRDYKNKRRVMIEPAEDGVEPVEYLIPKGKPFHLQEGDYIEKGEYILDGNPAPHDILAIKGVEALASYLVNEIQEVYRLQGVVINDKHIEVIVRQMLQKVEITDAGDSQYIVGDNVDRIEMEDMNDRLIEEGKKPAYGEPVLLGITKASLQTPSFISAASFQETTKVLTEAAIAGKTDTLQGLKENVIVGRLIPAGTGGTMTQIRRIATSRDDLILEERRKGTGAGSANQMLQDMTDQVPAAE.

C71, C73, C86, and C89 together coordinate Zn(2+). D462, D464, and D466 together coordinate Mg(2+). 4 residues coordinate Zn(2+): C811, C885, C892, and C895. Residues 1379–1402 (RKGTGAGSANQMLQDMTDQVPAAE) form a disordered region. Over residues 1385–1395 (GSANQMLQDMT) the composition is skewed to polar residues.

It belongs to the RNA polymerase beta' chain family. As to quaternary structure, the RNAP catalytic core consists of 2 alpha, 1 beta, 1 beta' and 1 omega subunit. When a sigma factor is associated with the core the holoenzyme is formed, which can initiate transcription. Requires Mg(2+) as cofactor. It depends on Zn(2+) as a cofactor.

It catalyses the reaction RNA(n) + a ribonucleoside 5'-triphosphate = RNA(n+1) + diphosphate. In terms of biological role, DNA-dependent RNA polymerase catalyzes the transcription of DNA into RNA using the four ribonucleoside triphosphates as substrates. In Agrobacterium fabrum (strain C58 / ATCC 33970) (Agrobacterium tumefaciens (strain C58)), this protein is DNA-directed RNA polymerase subunit beta'.